The following is a 206-amino-acid chain: MAKATFFYFLFIGYVWPIDSVMFNLAPNTQKCLKEDIQANQLVMGEYEVSDVPGQIIDYVARDTKGHILSQKEHITKGKFSFMSEVYDAYEICFISKVPPHQRGIPQEVSLVTKKGVETKSYEGIGEASKLKPLEVDLKRLEDLSDSIVRDFILMRKREEEMRDTNEKTNSRVLFFSIFSMCCLLGLATWQVLYLRRYFKAKKLIE.

The first 17 residues, 1 to 17 (MAKATFFYFLFIGYVWP), serve as a signal peptide directing secretion. Residues 18–172 (IDSVMFNLAP…RDTNEKTNSR (155 aa)) lie on the Lumenal side of the membrane. One can recognise a GOLD domain in the interval 30 to 140 (QKCLKEDIQA…LKPLEVDLKR (111 aa)). The helical transmembrane segment at 173–193 (VLFFSIFSMCCLLGLATWQVL) threads the bilayer. Residues 194–206 (YLRRYFKAKKLIE) lie on the Cytoplasmic side of the membrane.

It belongs to the EMP24/GP25L family.

The protein resides in the membrane. In terms of biological role, eca and bai are essential, though not redundant, for dorsoventral patterning of the embryo. Specifically required during early embryogenesis for the activity of maternal tkv, while the zygotic tkv is not affected. The chain is Transmembrane emp24 domain-containing protein bai from Drosophila persimilis (Fruit fly).